The sequence spans 236 residues: Uridylate kinase (236 aa).

10-13 (KLSG) is an ATP binding site. Gly-52 contacts UMP. ATP is bound by residues Gly-53 and Arg-57. Residues Asp-72 and 133-140 (TGNPFFTT) contribute to the UMP site. ATP contacts are provided by Thr-160, Tyr-166, and Asp-169.

This sequence belongs to the UMP kinase family. In terms of assembly, homohexamer.

The protein localises to the cytoplasm. It catalyses the reaction UMP + ATP = UDP + ADP. It participates in pyrimidine metabolism; CTP biosynthesis via de novo pathway; UDP from UMP (UMPK route): step 1/1. Its activity is regulated as follows. Inhibited by UTP. In terms of biological role, catalyzes the reversible phosphorylation of UMP to UDP. The sequence is that of Uridylate kinase from Cupriavidus necator (strain ATCC 17699 / DSM 428 / KCTC 22496 / NCIMB 10442 / H16 / Stanier 337) (Ralstonia eutropha).